The sequence spans 302 residues: Ubiquitin thioesterase OTU1 (302 aa).

Residues 5–83 (RCKARSGTQP…IVEEDTSKPS (79 aa)) form a UBX-like region. In terms of domain architecture, OTU spans 103 to 228 (LARRVVPADN…GIHYDPLERK (126 aa)). The segment at 108-114 (VPADNSC) is cys-loop. The active site involves D111. Catalysis depends on C114, which acts as the Nucleophile. The tract at residues 167-177 (IRREETWGGAI) is variable-loop. Residues 217–221 (YDGIH) form a his-loop region. Residue I220 participates in substrate binding. H221 is an active-site residue. The tract at residues 245–250 (DVVLAQ) is S2 site. A C2H2-type zinc finger spans residues 272 to 296 (LRCMVCQKGLTGQVEAREHAKETGH). The active site involves H296.

It is found in the cytoplasm. The catalysed reaction is Thiol-dependent hydrolysis of ester, thioester, amide, peptide and isopeptide bonds formed by the C-terminal Gly of ubiquitin (a 76-residue protein attached to proteins as an intracellular targeting signal).. Functionally, hydrolase that can remove conjugated ubiquitin from proteins and participates in endoplasmic reticulum-associated degradation (ERAD) for misfolded lumenal proteins. May act by triming the ubiquitin chain on the associated substrate to facilitate their threading through the VCP/p97 pore. Ubiquitin moieties on substrates may present a steric impediment to the threading process when the substrate is transferred to the VCP pore and threaded through VCP's axial channel. Mediates deubiquitination of 'Lys-27'-, 'Lys-29'- and 'Lys-33'-linked polyubiquitin chains. Also able to hydrolyze 'Lys-11'-linked ubiquitin chains. Cleaves both polyubiquitin and di-ubiquitin. The protein is Ubiquitin thioesterase OTU1 (YOD1) of Gallus gallus (Chicken).